The chain runs to 237 residues: Class B acid phosphatase (237 aa).

The signal sequence occupies residues 1-23 (MRKVTLVFSAIAFAFSLNGVVQA). D69 acts as the Nucleophile in catalysis. Mg(2+) contacts are provided by D69 and D71. D71 (proton donor) is an active-site residue. Substrate is bound by residues 137 to 138 (TG) and K177. D192 serves as a coordination point for Mg(2+).

It belongs to the class B bacterial acid phosphatase family. In terms of assembly, homotetramer. Mg(2+) is required as a cofactor.

It localises to the periplasm. It catalyses the reaction a phosphate monoester + H2O = an alcohol + phosphate. Functionally, dephosphorylates several organic phosphate monoesters. Also has a phosphotransferase activity catalyzing the transfer of low-energy phosphate groups from organic phosphate monoesters to free hydroxyl groups of various organic compounds. The protein is Class B acid phosphatase of Xenorhabdus bovienii (strain SS-2004) (Xenorhabdus nematophila subsp. bovienii).